Here is a 939-residue protein sequence, read N- to C-terminus: MSIDLKKRKVEEDVRSRGKNSKIFSPFRIIGNVSNGVPFATGTLGSTFYIVTCVGKTFQIYDANTLHLLFVSEKETPSSIVALSAHFHYVYAAYENKVGIYKRGIEEHLLELETDANVEHLCIFGDYLCASTDDNSIFIYKKSDPQDKYPSEFYTKLTVTEIQGGEIVSLQHLATYLNKLTVVTKSNVLLFNVRTGKLVFTSNEFPDQITTAEPAPVLDIIALGTVTGEVIMFNMRKGKRIRTIKIPQSRISSLSFRTDGSSHLSVGTSSGDLIFYDLDRRSRIHVLKNIHRESYGGVTQATFLNGQPIIVTSGGDNSLKEYVFDPSLSQGSGDVVVQPPRYLRSRGGHSQPPSYIAFADSQSHFMLSASKDRSLWSFSLRKDAQSQEMSQRLHKKQDGGRVGGSTIKSKFPEIVALAIENARIGEWENIITAHKDEKFARTWDMRNKRVGRWTFDTTDDGFVKSVAMSQCGNFGFIGSSNGSITIYNMQSGILRKKYKLHKRAVTGISLDGMNRKMVSCGLDGIVGFYDFNKSTLLGKLKLDAPITAMVYHRSSDLFALALDDLSIVVIDAVTQRVVRQLWGHSNRITAFDFSPEGRWIVSASLDSTIRTWDLPTGGCIDGIIVDNVATNVKFSPNGDLLATTHVTGNGICIWTNRAQFKTVSTRTIDESEFARMALPSTSVRGNDSMLSGALESNGGEDLNDIDFNTYTSLEQIDKELLTLSIGPRSKMNTLLHLDVIRKRSKPKEAPKKSEKLPFFLQLSGEKVGDEASVREGIAHETPEEIHRRDQEAQKKLDAEEQMNKFKVTGRLGFESHFTKQLREGSQSKDYSSLLATLINFSPAAVDLEIRSLNSFEPFDEIVWFIDALTQGLKSNKNFELYETFMSLLFKAHGDVIHANNKNQDIASALQNWEDVHKKEDRLDDLVKFCMGVAAFVTTA.

Serine 2 carries the N-acetylserine modification. WD repeat units lie at residues 40–71, 81–111, 119–158, 168–201, 208–245, 252–287, 295–347, 354–388, 415–454, 463–497, 505–541, 546–581, 583–624, and 626–664; these read ATGT…LLFV, VALS…HLLE, EHLC…TKLT, VSLQ…LVFT, QITT…RTIK, SSLS…IHVL, YGGV…RSRG, SYIA…QSQE, VALA…GRWT, VKSV…LRKK, VTGI…GKLK, ITAM…VRQL, GHSN…DGII, and DNVA…KTVS. Position 772 is a phosphoserine (serine 772).

In terms of assembly, interacts with snoRNA U3. Interacts with MPP10. Interacts (via WD repeats) with UTP18. Component of the ribosomal small subunit (SSU) processome composed of at least 40 protein subunits and snoRNA U3.

The protein localises to the nucleus. It is found in the nucleolus. Its function is as follows. Involved in nucleolar processing of pre-18S ribosomal RNA and ribosome assembly. The polypeptide is U3 small nucleolar RNA-associated protein 21 (UTP21) (Saccharomyces cerevisiae (strain ATCC 204508 / S288c) (Baker's yeast)).